Reading from the N-terminus, the 232-residue chain is Orotidine 5'-phosphate decarboxylase (232 aa).

Substrate is bound by residues Asp13, Lys35, 62–71 (DLKFHDIPNT), Thr121, Arg182, Gln191, Gly211, and Arg212. Lys64 (proton donor) is an active-site residue.

Belongs to the OMP decarboxylase family. Type 1 subfamily. In terms of assembly, homodimer.

It carries out the reaction orotidine 5'-phosphate + H(+) = UMP + CO2. It functions in the pathway pyrimidine metabolism; UMP biosynthesis via de novo pathway; UMP from orotate: step 2/2. In terms of biological role, catalyzes the decarboxylation of orotidine 5'-monophosphate (OMP) to uridine 5'-monophosphate (UMP). The sequence is that of Orotidine 5'-phosphate decarboxylase from Acinetobacter baumannii (strain AB0057).